The chain runs to 68 residues: Antimicrobial peptide Eval655 (68 aa).

The N-terminal stretch at Met-1 to Ala-23 is a signal peptide. Leucine amide is present on Leu-36. Positions Gly-37–Arg-68 are excised as a propeptide.

Belongs to the non-disulfide-bridged peptide (NDBP) superfamily. Short antimicrobial peptide (group 4) family. As to expression, expressed by the venom gland.

It is found in the secreted. Its function is as follows. Probable antimicrobial peptide. Shows low inhibitory activity against herpes simplex virus type 1 (HSV-1). The chain is Antimicrobial peptide Eval655 from Euscorpiops validus (Scorpion).